Consider the following 257-residue polypeptide: 5-oxoprolinase subunit A (257 aa).

The protein belongs to the LamB/PxpA family. In terms of assembly, forms a complex composed of PxpA, PxpB and PxpC.

It catalyses the reaction 5-oxo-L-proline + ATP + 2 H2O = L-glutamate + ADP + phosphate + H(+). In terms of biological role, catalyzes the cleavage of 5-oxoproline to form L-glutamate coupled to the hydrolysis of ATP to ADP and inorganic phosphate. The sequence is that of 5-oxoprolinase subunit A from Pectobacterium atrosepticum (strain SCRI 1043 / ATCC BAA-672) (Erwinia carotovora subsp. atroseptica).